The primary structure comprises 657 residues: Penicillin-binding protein activator LpoA (657 aa).

Positions 1 to 25 (MLSSTFVRSKAGLVPVILAALILAA) are cleaved as a signal peptide. Residue cysteine 26 is the site of N-palmitoyl cysteine attachment. The S-diacylglycerol cysteine moiety is linked to residue cysteine 26.

It belongs to the LpoA family. Interacts with PBP1a.

It is found in the cell outer membrane. Regulator of peptidoglycan synthesis that is essential for the function of penicillin-binding protein 1A (PBP1a). The protein is Penicillin-binding protein activator LpoA of Yersinia pestis bv. Antiqua (strain Angola).